The following is a 272-amino-acid chain: Phosphonates import ATP-binding protein PhnC 1 (272 aa).

One can recognise an ABC transporter domain in the interval 2 to 246; it reads LRIQALTKTY…VLTSIYGEED (245 aa). 35–42 lines the ATP pocket; the sequence is GPSGAGKS.

It belongs to the ABC transporter superfamily. Phosphonates importer (TC 3.A.1.9.1) family. In terms of assembly, the complex is composed of two ATP-binding proteins (PhnC), two transmembrane proteins (PhnE) and a solute-binding protein (PhnD).

It localises to the cell inner membrane. The catalysed reaction is phosphonate(out) + ATP + H2O = phosphonate(in) + ADP + phosphate + H(+). Part of the ABC transporter complex PhnCDE involved in phosphonates import. Responsible for energy coupling to the transport system. The sequence is that of Phosphonates import ATP-binding protein PhnC 1 from Rhodopseudomonas palustris (strain BisB18).